Reading from the N-terminus, the 316-residue chain is Homoserine kinase (316 aa).

97–107 (PPARGLGSSAS) provides a ligand contact to ATP.

It belongs to the GHMP kinase family. Homoserine kinase subfamily.

It localises to the cytoplasm. It carries out the reaction L-homoserine + ATP = O-phospho-L-homoserine + ADP + H(+). It functions in the pathway amino-acid biosynthesis; L-threonine biosynthesis; L-threonine from L-aspartate: step 4/5. Catalyzes the ATP-dependent phosphorylation of L-homoserine to L-homoserine phosphate. The chain is Homoserine kinase from Prochlorococcus marinus (strain MIT 9303).